A 179-amino-acid chain; its full sequence is Replication restart protein DnaT (179 aa).

A disordered region spans residues glycine 156 to glycine 179.

This sequence belongs to the DnaT family. Homooligomerizes. Interacts with PriB. Component of the replication restart primosome. Primosome assembly occurs via a 'hand-off' mechanism. PriA binds to replication forks, subsequently PriB then DnaT bind; DnaT then displaces ssDNA to generate the helicase loading substrate.

Its function is as follows. Involved in the restart of stalled replication forks, which reloads the replicative helicase on sites other than the origin of replication. Can function in multiple replication restart pathways. Displaces ssDNA from a PriB-ssDNA complex. Probably forms a spiral filament on ssDNA. This chain is Replication restart protein DnaT, found in Escherichia coli (strain ATCC 8739 / DSM 1576 / NBRC 3972 / NCIMB 8545 / WDCM 00012 / Crooks).